The following is a 116-amino-acid chain: DNA polymerase epsilon subunit 4 (116 aa).

The span at 1–10 (MAAAAPGSGA) shows a compositional bias: low complexity. The interval 1–36 (MAAAAPGSGAAREEEGTGGDAATPQPPAPTSAPGAR) is disordered.

In terms of assembly, component of the DNA polymerase epsilon complex consisting of four subunits: the catalytic subunit POLE and the accessory subunits POLE2, POLE3 and POLE4. Interaction with POLE3 is a prerequisite for further binding with POLE and POLE2.

It is found in the nucleus. In terms of biological role, accessory component of the DNA polymerase epsilon complex. Participates in DNA repair and in chromosomal DNA replication. The sequence is that of DNA polymerase epsilon subunit 4 (POLE4) from Bos taurus (Bovine).